We begin with the raw amino-acid sequence, 537 residues long: Cytochrome P450 monooxygenase yanC (537 aa).

Positions 1–21 (MALVHLTALAACGLLLVILRA) are cleaved as a signal peptide. Heme is bound at residue Cys-449.

This sequence belongs to the cytochrome P450 family. Requires heme as cofactor.

Its pathway is secondary metabolite biosynthesis; terpenoid biosynthesis. Its function is as follows. Cytochrome P450 monooxygenase; part of the gene cluster that mediates the biosynthesis of yanuthone D, a fungal isoprenoid epoxycyclohexenone that acts as an antibiotic against fungi and bacteria. The first step of the pathway is the synthesis of 6-methylsalicylic acid (6-MSA) by the polyketide synthase yanA. 6-MSA is then converted to m-cresol by the decarboxylase yanB. The cytochrome P450 monooxygenase yanC then catalyzes the oxidation of m-cresol to toluquinol. Epoxidation of toluquinol is then performed by the short chain dehydrogenase yanD, with the help of yanE, and a further prenylation by yanG leads to 7-deacetoxyyanuthone A. The next step is the hydroxylation of C-22 of 7-deacetoxyyanuthone A by the cytochrome P450 monooxygenase yanH to yield 22-deacetylyanuthone A. O-Mevalon transferase yanI then attaches mevalon to the hydroxyl group of 22-deacetylyanuthone A to produce yanuthone E. Finally, the FAD-dependent monooxygenase yanF oxidizes the hydroxyl group at C15 of yanuthone E to form yanuthone D. Furthermore, several branching points in the pathway lead to the production of yanuthones F and G from 7-deacetoxyyanuthone A; yanuthones H and I from 22-deacetylyanuthone A; and yanuthone J from yanuthone E. YanC is also involved in the synthesis of yanuthone X1 which does not have 6-methylsalicylic acid (6-MSA) as precursor. The polypeptide is Cytochrome P450 monooxygenase yanC (Aspergillus niger (strain ATCC 1015 / CBS 113.46 / FGSC A1144 / LSHB Ac4 / NCTC 3858a / NRRL 328 / USDA 3528.7)).